We begin with the raw amino-acid sequence, 82 residues long: ATP synthase subunit c (82 aa).

2 helical membrane-spanning segments follow: residues 6–26 (LGLTCLAAAIGMAIAAAGCGI) and 49–69 (IMVTLILGLAFVESLAIYALV).

This sequence belongs to the ATPase C chain family. F-type ATPases have 2 components, F(1) - the catalytic core - and F(0) - the membrane proton channel. F(1) has five subunits: alpha(3), beta(3), gamma(1), delta(1), epsilon(1). F(0) has three main subunits: a(1), b(2) and c(10-14). The alpha and beta chains form an alternating ring which encloses part of the gamma chain. F(1) is attached to F(0) by a central stalk formed by the gamma and epsilon chains, while a peripheral stalk is formed by the delta and b chains.

It localises to the cell inner membrane. Functionally, f(1)F(0) ATP synthase produces ATP from ADP in the presence of a proton or sodium gradient. F-type ATPases consist of two structural domains, F(1) containing the extramembraneous catalytic core and F(0) containing the membrane proton channel, linked together by a central stalk and a peripheral stalk. During catalysis, ATP synthesis in the catalytic domain of F(1) is coupled via a rotary mechanism of the central stalk subunits to proton translocation. In terms of biological role, key component of the F(0) channel; it plays a direct role in translocation across the membrane. A homomeric c-ring of between 10-14 subunits forms the central stalk rotor element with the F(1) delta and epsilon subunits. In Nitratidesulfovibrio vulgaris (strain ATCC 29579 / DSM 644 / CCUG 34227 / NCIMB 8303 / VKM B-1760 / Hildenborough) (Desulfovibrio vulgaris), this protein is ATP synthase subunit c.